Here is a 478-residue protein sequence, read N- to C-terminus: ATP synthase subunit beta (478 aa).

160–167 (GGAGVGKT) is a binding site for ATP.

It belongs to the ATPase alpha/beta chains family. In terms of assembly, F-type ATPases have 2 components, CF(1) - the catalytic core - and CF(0) - the membrane proton channel. CF(1) has five subunits: alpha(3), beta(3), gamma(1), delta(1), epsilon(1). CF(0) has three main subunits: a(1), b(2) and c(9-12). The alpha and beta chains form an alternating ring which encloses part of the gamma chain. CF(1) is attached to CF(0) by a central stalk formed by the gamma and epsilon chains, while a peripheral stalk is formed by the delta and b chains.

It is found in the cell inner membrane. The enzyme catalyses ATP + H2O + 4 H(+)(in) = ADP + phosphate + 5 H(+)(out). Functionally, produces ATP from ADP in the presence of a proton gradient across the membrane. The catalytic sites are hosted primarily by the beta subunits. This is ATP synthase subunit beta from Orientia tsutsugamushi (strain Boryong) (Rickettsia tsutsugamushi).